The sequence spans 528 residues: GTPase Der (528 aa).

2 stretches are compositionally biased toward acidic residues: residues 1 to 12 (MDVEGAFADEEE) and 30 to 62 (GYDD…PDFG). Positions 1–62 (MDVEGAFADE…EDDFAAPDFG (62 aa)) are disordered. 2 consecutive EngA-type G domains span residues 90–253 (CTVA…PEEP) and 263–436 (RRVA…ENWD). GTP is bound by residues 96–103 (GRPNVGKS), 143–147 (DTGGW), 205–208 (NKFD), 269–276 (GKPNVGKS), 316–320 (DTAGL), and 381–384 (NKWD). Positions 437–519 (RRVSTGQLNN…PIRIAVRVRE (83 aa)) constitute a KH-like domain.

Belongs to the TRAFAC class TrmE-Era-EngA-EngB-Septin-like GTPase superfamily. EngA (Der) GTPase family. As to quaternary structure, associates with the 50S ribosomal subunit.

Its function is as follows. GTPase that plays an essential role in the late steps of ribosome biogenesis. This Corynebacterium efficiens (strain DSM 44549 / YS-314 / AJ 12310 / JCM 11189 / NBRC 100395) protein is GTPase Der.